A 1060-amino-acid polypeptide reads, in one-letter code: MSTIPGFNQIQFEGFCRFIDQGLTEELSKFPKIEDTNQEIDFELFLERYQLVEPSIKERDAVYESLTYSSELYVSARLIWKNDRRRYIQEQTILIGKIPLMTSLGAFIVNGIYRIVINQILQSPGIYYQSELNDNGISVYTGTIISDWGGRLELEIDRKTRIWVRVSRQQKLSILVLLSAMGLNIREILENVCYPELFLSFLNDKKQIGSKENAILEFYQQFACVEGDPVFSESLSKDLQKKFFQQRCELGGIGRRNMNRRLNLDIPQNNTFLLPRDILAAADRLIRIKFGMGTLDDMNHLQNKRIRSVADLLQEQFGLALVRLENMARGNIYAALKHNWTPTPQNLVNSTPLTDTYKVFFRLHPLSQVLDRTNPLTQIVHGRKLSYLGPGGLTARTATFPIRDIHPSHYGRICPIDTSEGINVGLIGSLAIHARIGRWGSLESPFYKISERSKGARMLYLSPGRDEYYMVAAGNSLALNQGIQEEQVVPARYRQEFLTIAWEQVHLRSIFSFQYFSIGASLIPFIEHNDANRALMSSNMQRQAVPLSQSEKCIVGTGLEGQAALDSGALAIAEHEGEIIYTDTDKILLSGNGDTLRIPLVMYQRSNKNTCMHQKPQVQRGKCIKKGQILAYGAATVGGELALGKNVLVAYMPWEGYNFEDAVLISERLVYEDIYTSFHIRKYEIQINQGSERVTNEIPHLEVHLLRNLDKNGIVMLGSWVETGDILVGKLTPQMVKESSYAPEDRLLRTILGMRVYTSKETCLKLPIGGRGRVIDVRWVQSSKTDETEKTESIRVYILQKREIKVGDKVAGRHGNKGIISKILPRQDMPYLQDGRPVDMVFNPLGVPSRMNVGQIFESSLGLAGGLLDRHYRIAPFDERYEQEASRKLVFSELYEASKQTVNPWIFEPESPGKSRIFDGRTGDPFEQPVIIGKPYILKLIHQVDDKIHGRSSGRYSRLTQQPLKGRAKKGGQRVGEMEVWALEGFGVAYILQEMLTYKSDHIRARQEVLGTIIFGGRIPTPEDAPESFRLFVRELRSLALELNHFLVSEKTFQLNRKEA.

The protein belongs to the RNA polymerase beta chain family. In terms of assembly, in plastids the minimal PEP RNA polymerase catalytic core is composed of four subunits: alpha, beta, beta', and beta''. When a (nuclear-encoded) sigma factor is associated with the core the holoenzyme is formed, which can initiate transcription.

It localises to the plastid. The protein resides in the chloroplast. The catalysed reaction is RNA(n) + a ribonucleoside 5'-triphosphate = RNA(n+1) + diphosphate. Functionally, DNA-dependent RNA polymerase catalyzes the transcription of DNA into RNA using the four ribonucleoside triphosphates as substrates. The polypeptide is DNA-directed RNA polymerase subunit beta (Lactuca sativa (Garden lettuce)).